The sequence spans 1295 residues: DNA-directed RNA polymerase subunit beta' (1295 aa).

4 residues coordinate Zn(2+): cysteine 60, cysteine 62, cysteine 75, and cysteine 78. Positions 516, 518, and 520 each coordinate Mg(2+). Zn(2+) contacts are provided by cysteine 841, cysteine 914, cysteine 921, and cysteine 924.

Belongs to the RNA polymerase beta' chain family. As to quaternary structure, the RNAP catalytic core consists of 2 alpha, 1 beta, 1 beta' and 1 omega subunit. When a sigma factor is associated with the core the holoenzyme is formed, which can initiate transcription. The cofactor is Mg(2+). Zn(2+) is required as a cofactor.

The enzyme catalyses RNA(n) + a ribonucleoside 5'-triphosphate = RNA(n+1) + diphosphate. DNA-dependent RNA polymerase catalyzes the transcription of DNA into RNA using the four ribonucleoside triphosphates as substrates. This chain is DNA-directed RNA polymerase subunit beta', found in Dehalococcoides mccartyi (strain ATCC BAA-2100 / JCM 16839 / KCTC 5957 / BAV1).